We begin with the raw amino-acid sequence, 386 residues long: Mannitol-1-phosphate 5-dehydrogenase (386 aa).

4-15 (AIHFGGGNIGRG) contacts NAD(+). Residue lysine 211 is part of the active site.

Belongs to the mannitol dehydrogenase family. In terms of assembly, monomer.

It catalyses the reaction D-mannitol 1-phosphate + NAD(+) = beta-D-fructose 6-phosphate + NADH + H(+). Catalyzes the NAD(H)-dependent interconversion of D-fructose 6-phosphate and D-mannitol 1-phosphate in the mannitol metabolic pathway. The polypeptide is Mannitol-1-phosphate 5-dehydrogenase (mpdA) (Emericella nidulans (strain FGSC A4 / ATCC 38163 / CBS 112.46 / NRRL 194 / M139) (Aspergillus nidulans)).